A 545-amino-acid polypeptide reads, in one-letter code: Glucose-6-phosphate isomerase (545 aa).

The Proton donor role is filled by Glu353. Catalysis depends on residues His384 and Lys510.

Belongs to the GPI family.

It is found in the cytoplasm. The catalysed reaction is alpha-D-glucose 6-phosphate = beta-D-fructose 6-phosphate. It functions in the pathway carbohydrate biosynthesis; gluconeogenesis. The protein operates within carbohydrate degradation; glycolysis; D-glyceraldehyde 3-phosphate and glycerone phosphate from D-glucose: step 2/4. In terms of biological role, catalyzes the reversible isomerization of glucose-6-phosphate to fructose-6-phosphate. The sequence is that of Glucose-6-phosphate isomerase from Aromatoleum aromaticum (strain DSM 19018 / LMG 30748 / EbN1) (Azoarcus sp. (strain EbN1)).